The primary structure comprises 257 residues: NAD-capped RNA hydrolase NudC (257 aa).

Positions 25 and 69 each coordinate substrate. Residues cysteine 98 and cysteine 101 each coordinate Zn(2+). Glutamate 111 contacts substrate. Positions 116 and 119 each coordinate Zn(2+). A substrate-binding site is contributed by tyrosine 124. Residues 125–248 form the Nudix hydrolase domain; that stretch reads PQIAPCIIVA…TVARRLIEDT (124 aa). A divalent metal cation is bound by residues alanine 158, glutamate 174, and glutamate 178. The short motif at 159-180 is the Nudix box element; the sequence is GFVEVGETLEQAVAREVMEESG. 192-199 serves as a coordination point for substrate; sequence QPWPFPQS. Glutamate 219 provides a ligand contact to a divalent metal cation. Position 241 (alanine 241) interacts with substrate.

Belongs to the Nudix hydrolase family. NudC subfamily. Homodimer. Mg(2+) serves as cofactor. Requires Mn(2+) as cofactor. It depends on Zn(2+) as a cofactor.

It carries out the reaction a 5'-end NAD(+)-phospho-ribonucleoside in mRNA + H2O = a 5'-end phospho-adenosine-phospho-ribonucleoside in mRNA + beta-nicotinamide D-ribonucleotide + 2 H(+). The catalysed reaction is NAD(+) + H2O = beta-nicotinamide D-ribonucleotide + AMP + 2 H(+). The enzyme catalyses NADH + H2O = reduced beta-nicotinamide D-ribonucleotide + AMP + 2 H(+). Functionally, mRNA decapping enzyme that specifically removes the nicotinamide adenine dinucleotide (NAD) cap from a subset of mRNAs by hydrolyzing the diphosphate linkage to produce nicotinamide mononucleotide (NMN) and 5' monophosphate mRNA. The NAD-cap is present at the 5'-end of some mRNAs and stabilizes RNA against 5'-processing. Has preference for mRNAs with a 5'-end purine. Catalyzes the hydrolysis of a broad range of dinucleotide pyrophosphates. This is NAD-capped RNA hydrolase NudC from Escherichia coli O157:H7.